The sequence spans 299 residues: Apolipoprotein E (299 aa).

An N-terminal signal peptide occupies residues 1-18 (MKVLWAVLVVTLLAGCRA). Tandem repeats lie at residues 74–95 (LLME…QELA), 96–117 (PMAE…ARLG), 118–139 (ADME…AMLG), 140–161 (QSAE…KRLL), 162–183 (RDAE…EGAE), 184–205 (RGVS…LRSA), and 224–245 (GRLE…EQME). The tract at residues 74 to 245 (LLMEDTMKEV…RLDVVREQME (172 aa)) is 8 X 22 AA approximate tandem repeats. At methionine 137 the chain carries Methionine sulfoxide. Serine 141 is modified (phosphoserine). Residues 152 to 162 (HLRKMRKRLLR) form an LDL and other lipoprotein receptors binding region. 156–159 (MRKR) contacts heparin. The lipid-binding and lipoprotein association stretch occupies residues 204–273 (SALTSQPLRE…GWFEPMVEDM (70 aa)). Residue 219–226 (GERLRGRL) participates in heparin binding. Residues 261–273 (RLKGWFEPMVEDM) are specificity for association with VLDL.

The protein belongs to the apolipoprotein A1/A4/E family. In terms of assembly, homotetramer. May interact with ABCA1; functionally associated with ABCA1 in the biogenesis of HDLs. May interact with APP/A4 amyloid-beta peptide; the interaction is extremely stable in vitro but its physiological significance is unclear. May interact with MAPT. May interact with MAP2. In the cerebrospinal fluid, interacts with secreted SORL1. Interacts with PMEL; this allows the loading of PMEL luminal fragment on ILVs to induce fibril nucleation. In terms of processing, APOE exists as multiple glycosylated and sialylated glycoforms within cells and in plasma. The extent of glycosylation and sialylation are tissue and context specific. Post-translationally, glycated in plasma VLDL. Phosphorylated by FAM20C in the extracellular medium.

The protein localises to the secreted. It localises to the extracellular space. The protein resides in the extracellular matrix. Its subcellular location is the extracellular vesicle. It is found in the endosome. The protein localises to the multivesicular body. In terms of biological role, APOE is an apolipoprotein, a protein associating with lipid particles, that mainly functions in lipoprotein-mediated lipid transport between organs via the plasma and interstitial fluids. APOE is a core component of plasma lipoproteins and is involved in their production, conversion and clearance. Apolipoproteins are amphipathic molecules that interact both with lipids of the lipoprotein particle core and the aqueous environment of the plasma. As such, APOE associates with chylomicrons, chylomicron remnants, very low density lipoproteins (VLDL) and intermediate density lipoproteins (IDL) but shows a preferential binding to high-density lipoproteins (HDL). It also binds a wide range of cellular receptors including the LDL receptor/LDLR, the LDL receptor-related proteins LRP1, LRP2 and LRP8 and the very low-density lipoprotein receptor/VLDLR that mediate the cellular uptake of the APOE-containing lipoprotein particles. Finally, APOE also has a heparin-binding activity and binds heparan-sulfate proteoglycans on the surface of cells, a property that supports the capture and the receptor-mediated uptake of APOE-containing lipoproteins by cells. A main function of APOE is to mediate lipoprotein clearance through the uptake of chylomicrons, VLDLs, and HDLs by hepatocytes. APOE is also involved in the biosynthesis by the liver of VLDLs as well as their uptake by peripheral tissues ensuring the delivery of triglycerides and energy storage in muscle, heart and adipose tissues. By participating in the lipoprotein-mediated distribution of lipids among tissues, APOE plays a critical role in plasma and tissues lipid homeostasis. APOE is also involved in two steps of reverse cholesterol transport, the HDLs-mediated transport of cholesterol from peripheral tissues to the liver, and thereby plays an important role in cholesterol homeostasis. First, it is functionally associated with ABCA1 in the biogenesis of HDLs in tissues. Second, it is enriched in circulating HDLs and mediates their uptake by hepatocytes. APOE also plays an important role in lipid transport in the central nervous system, regulating neuron survival and sprouting. This Erethizon dorsatum (North American porcupine) protein is Apolipoprotein E (APOE).